The chain runs to 214 residues: MRAELAVYFIAGTQDIVRGTLPGVLEEALKAGITCFQYREKGVGSLQTASERKEMALECQQLCAKYQVPFIINDDVALALEIGADGIHVGQNDEGIRQVIASCAGKMKIGLSVHSVSEAAEAERLGAVDYIGVGPIFPTISKADAEPVSGTAILEEIRRAGIKLPIVGIGGINEKNSAEVLTAGADGVSVISAITRSDDCYSVIKQLKNPGSPS.

Residues Q37–K41 and N73 each bind 4-amino-2-methyl-5-(diphosphooxymethyl)pyrimidine. The Mg(2+) site is built by D74 and D93. Residue S112 participates in 4-amino-2-methyl-5-(diphosphooxymethyl)pyrimidine binding. T139–S141 is a binding site for 2-[(2R,5Z)-2-carboxy-4-methylthiazol-5(2H)-ylidene]ethyl phosphate. 4-amino-2-methyl-5-(diphosphooxymethyl)pyrimidine is bound at residue K142. Residues G171 and I191–S192 contribute to the 2-[(2R,5Z)-2-carboxy-4-methylthiazol-5(2H)-ylidene]ethyl phosphate site.

This sequence belongs to the thiamine-phosphate synthase family. Mg(2+) serves as cofactor.

It catalyses the reaction 2-[(2R,5Z)-2-carboxy-4-methylthiazol-5(2H)-ylidene]ethyl phosphate + 4-amino-2-methyl-5-(diphosphooxymethyl)pyrimidine + 2 H(+) = thiamine phosphate + CO2 + diphosphate. The enzyme catalyses 2-(2-carboxy-4-methylthiazol-5-yl)ethyl phosphate + 4-amino-2-methyl-5-(diphosphooxymethyl)pyrimidine + 2 H(+) = thiamine phosphate + CO2 + diphosphate. The catalysed reaction is 4-methyl-5-(2-phosphooxyethyl)-thiazole + 4-amino-2-methyl-5-(diphosphooxymethyl)pyrimidine + H(+) = thiamine phosphate + diphosphate. It functions in the pathway cofactor biosynthesis; thiamine diphosphate biosynthesis; thiamine phosphate from 4-amino-2-methyl-5-diphosphomethylpyrimidine and 4-methyl-5-(2-phosphoethyl)-thiazole: step 1/1. Condenses 4-methyl-5-(beta-hydroxyethyl)thiazole monophosphate (THZ-P) and 2-methyl-4-amino-5-hydroxymethyl pyrimidine pyrophosphate (HMP-PP) to form thiamine monophosphate (TMP). This chain is Thiamine-phosphate synthase, found in Listeria monocytogenes serotype 4a (strain HCC23).